Consider the following 850-residue polypeptide: Protein argonaute 8 (850 aa).

A disordered region spans residues 1–30 (MDTTLPPPQHMEREPLKSKSSLLPMTRRGN). A PAZ domain is found at 247 to 361 (PVVDFLIANQ…FPIELCELVS (115 aa)). Residues 518 to 811 (QSILGEVPPK…AAAQMATAMK (294 aa)) form the Piwi domain.

It belongs to the argonaute family. Ago subfamily.

Its function is as follows. Involved in RNA-mediated post-transcriptional gene silencing (PTGS). Main component of the RNA-induced silencing complex (RISC) that binds to a short guide RNA such as a microRNA (miRNA) or small interfering RNA (siRNA). RISC uses the mature miRNA or siRNA as a guide for slicer-directed cleavage of homologous mRNAs to repress gene expression. The chain is Protein argonaute 8 (AGO8) from Arabidopsis thaliana (Mouse-ear cress).